A 600-amino-acid polypeptide reads, in one-letter code: L-galactono-1,4-lactone dehydrogenase, mitochondrial (600 aa).

The transit peptide at 1–25 (MLRSLLLRRSNARSLRPPFPPLRTL) directs the protein to the mitochondrion. Residues 16-51 (RPPFPPLRTLCTSGQTLTPAPPPPPPPPPPISSSAS) form a disordered region. Positions 26 to 91 (CTSGQTLTPA…AKHKKAQIFR (66 aa)) are cleaved as a propeptide — removed in mature form. Pro residues predominate over residues 34 to 46 (PAPPPPPPPPPPI). Residues 58-74 (YAGYAALALFSGAATYF) traverse the membrane as a helical segment. One can recognise an FAD-binding PCMH-type domain in the interval 108-279 (THEVQTRNFN…AEVTLQCVER (172 aa)).

The cofactor is FAD.

It is found in the mitochondrion membrane. The enzyme catalyses L-galactono-1,4-lactone + 4 Fe(III)-[cytochrome c] = L-dehydroascorbate + 4 Fe(II)-[cytochrome c] + 5 H(+). The protein operates within cofactor biosynthesis; L-ascorbate biosynthesis. Its activity is regulated as follows. Inhibited by sulfhydryl-modifying agents such as N-ethylmaleimide, monoiodoacetic acid and p-hydroxymercuribenzoic acid. No inhibition by riboflavin and lycorine. In terms of biological role, involved in the biosynthesis of ascorbic acid. Uses L-galactono-1,4-lactone as substrate, but not L-gulono-1,4-lactone, D-galactono-1,4-lactone, D-gulono-1,4-lactone, D-erythronic-1,4-lactone, D-xylonic-1,4-lactone, L-mannono-1,4-lactone, D-galactonic acid, D-glucuronic acid or D-gluconic acid. FAD, NAD, NADP and O(2) cannot act as electron acceptor. This is L-galactono-1,4-lactone dehydrogenase, mitochondrial from Brassica oleracea (Wild cabbage).